A 162-amino-acid chain; its full sequence is uncharacterized protein (162 aa).

The HTH asnC-type domain occupies 6–71; the sequence is LDDLDRAILK…PIKPRKLALV (66 aa). The segment at residues 25–44 is a DNA-binding region (H-T-H motif); the sequence is IAEISNQLKKPESTVHFRIK.

This is an uncharacterized protein from Pyrococcus abyssi (strain GE5 / Orsay).